The following is a 124-amino-acid chain: Large ribosomal subunit protein eL22y (124 aa).

Belongs to the eukaryotic ribosomal protein eL22 family.

The protein is Large ribosomal subunit protein eL22y (RPL22C) of Arabidopsis thaliana (Mouse-ear cress).